The primary structure comprises 128 residues: uncharacterized protein (128 aa).

The next 2 helical transmembrane spans lie at L52–L72 and L91–I111.

It localises to the cell membrane. This is an uncharacterized protein from Mycoplasma pneumoniae (strain ATCC 29342 / M129 / Subtype 1) (Mycoplasmoides pneumoniae).